The primary structure comprises 258 residues: Phosphate import ATP-binding protein PstB (258 aa).

The ABC transporter domain occupies 13–253; it reads IEVENLNLWY…PKEQSTEDYI (241 aa). 45 to 52 contacts ATP; the sequence is GPSGCGKS.

The protein belongs to the ABC transporter superfamily. Phosphate importer (TC 3.A.1.7) family. The complex is composed of two ATP-binding proteins (PstB), two transmembrane proteins (PstC and PstA) and a solute-binding protein (PstS).

It is found in the cell membrane. The enzyme catalyses phosphate(out) + ATP + H2O = ADP + 2 phosphate(in) + H(+). Part of the ABC transporter complex PstSACB involved in phosphate import. Responsible for energy coupling to the transport system. The sequence is that of Phosphate import ATP-binding protein PstB from Methanosarcina acetivorans (strain ATCC 35395 / DSM 2834 / JCM 12185 / C2A).